A 240-amino-acid polypeptide reads, in one-letter code: Probable transcriptional regulatory protein MS53_0373 (240 aa).

This sequence belongs to the TACO1 family.

It localises to the cytoplasm. In Mycoplasmopsis synoviae (strain 53) (Mycoplasma synoviae), this protein is Probable transcriptional regulatory protein MS53_0373.